Here is a 728-residue protein sequence, read N- to C-terminus: MARAKKVDKIKELMWKPKFIRNIGIVAHIDHGKTTLSDNLLAGAGMISEELAGQQLYLDFDEQEQERGITINAANVSMVHEYEGQDYLINLIDTPGHVDFGGDVTRAMRAVDGVIVVVDAVEGVMPQTETVLRQALKENVKPVLFVNKVDRLIKELELTPQQMQERLIKVITEVNKLIKAMRPDKYSEWKIDVANGSAAFGSALYNWAVSVPSQKKTGIGFKEVYEHIKEGKVKELAKKSPLYQVVLDMVIRHLPSPIEAQKERIAVIWKGDINSEVGKAMVNCDPKGPVALMITKIVVEPQAGEIAVGRLYSGTIRPGMELYIVDRKAKNRIQTVGLYMGPRRVEVDEIPAGNIVAVIGLKDAVAGSTCTTVENLTPFESIKHYSEPVVTMAIEAKNPRDLPKLIEVLRKLAKEDPTLHITLNEETGEHLISGMGELHLEVKVEKIRRDYKLDVITSPPIVVFRETVTGTSPVVEGKSPNKHNRFYIVVEPLPEKVIQMFKEGVVDMKMDKKERRRLLQEAGLTSEEAAGAEEYYEGNLFCDVTKGIQYLNETMELILEGFREAMRAGPIAREPCMGIKVKLVDCKLHEDAVHRGPAQVIPAVRSAIFAAILQAKPALLEPYQKIFITVPQDMMGAVTREIQGRRGQILEMKTEGDMVTIIAKAPVKEMFGFAGAIRGATSGKAIWSTEHAGFELVPQNLFQEFVMEVRKRKGLKLEMPKPEDFVGL.

The region spanning 18 to 258 (KFIRNIGIVA…MVIRHLPSPI (241 aa)) is the tr-type G domain. Residues 27 to 34 (AHIDHGKT), 93 to 97 (DTPGH), and 147 to 150 (NKVD) each bind GTP. H594 carries the diphthamide modification.

The protein belongs to the TRAFAC class translation factor GTPase superfamily. Classic translation factor GTPase family. EF-G/EF-2 subfamily.

The protein resides in the cytoplasm. Catalyzes the GTP-dependent ribosomal translocation step during translation elongation. During this step, the ribosome changes from the pre-translocational (PRE) to the post-translocational (POST) state as the newly formed A-site-bound peptidyl-tRNA and P-site-bound deacylated tRNA move to the P and E sites, respectively. Catalyzes the coordinated movement of the two tRNA molecules, the mRNA and conformational changes in the ribosome. In Archaeoglobus fulgidus (strain ATCC 49558 / DSM 4304 / JCM 9628 / NBRC 100126 / VC-16), this protein is Elongation factor 2 (fusA).